The primary structure comprises 254 residues: Transcription factor CAULIFLOWER (254 aa).

An MADS-box domain is found at 1 to 61 (MGRGRVEMKR…GKLFEYSSES (61 aa)). The K-box domain occupies 90–180 (QTNWSMEYSR…TKQIKERESI (91 aa)). Positions 182–191 (RTHQNQSEQQ) are enriched in polar residues. The segment at 182 to 205 (RTHQNQSEQQNRSHHVAPQPQPQL) is disordered.

Homodimer capable of binding to CArG-box sequences.

It localises to the nucleus. In terms of biological role, probable transcription factor that promotes early floral meristem identity in synergy with APETALA1, FRUITFULL and LEAFY. Is required subsequently for the transition of an inflorescence meristem into a floral meristem. Seems to be partially redundant to the function of APETALA1. This chain is Transcription factor CAULIFLOWER (CAL), found in Brassica rapa subsp. chinensis (Pak-choi).